A 375-amino-acid chain; its full sequence is Chaperone protein DnaJ (375 aa).

A J domain is found at 5–70 (DYYELLGISR…EKRAAYDQYG (66 aa)). A CR-type zinc finger spans residues 132 to 210 (GTTKDIKIHT…CHGDGRVNKA (79 aa)). Zn(2+) contacts are provided by cysteine 145, cysteine 148, cysteine 162, cysteine 165, cysteine 184, cysteine 187, cysteine 198, and cysteine 201. 4 CXXCXGXG motif repeats span residues 145–152 (CDTCHGTG), 162–169 (CPHCHGAG), 184–191 (CHFCHGTG), and 198–205 (CKTCHGDG).

It belongs to the DnaJ family. Homodimer. Requires Zn(2+) as cofactor.

The protein localises to the cytoplasm. Functionally, participates actively in the response to hyperosmotic and heat shock by preventing the aggregation of stress-denatured proteins and by disaggregating proteins, also in an autonomous, DnaK-independent fashion. Unfolded proteins bind initially to DnaJ; upon interaction with the DnaJ-bound protein, DnaK hydrolyzes its bound ATP, resulting in the formation of a stable complex. GrpE releases ADP from DnaK; ATP binding to DnaK triggers the release of the substrate protein, thus completing the reaction cycle. Several rounds of ATP-dependent interactions between DnaJ, DnaK and GrpE are required for fully efficient folding. Also involved, together with DnaK and GrpE, in the DNA replication of plasmids through activation of initiation proteins. This Aggregatibacter actinomycetemcomitans (Actinobacillus actinomycetemcomitans) protein is Chaperone protein DnaJ.